A 69-amino-acid chain; its full sequence is Large ribosomal subunit protein bL28 (69 aa).

The protein belongs to the bacterial ribosomal protein bL28 family.

The polypeptide is Large ribosomal subunit protein bL28 (Nitratidesulfovibrio vulgaris (strain ATCC 29579 / DSM 644 / CCUG 34227 / NCIMB 8303 / VKM B-1760 / Hildenborough) (Desulfovibrio vulgaris)).